The sequence spans 301 residues: GTPase Era (301 aa).

The Era-type G domain occupies 4–173 (KAGFVALIGK…LECISKHLIP (170 aa)). The interval 12–19 (GKPNAGKS) is G1. 12–19 (GKPNAGKS) lines the GTP pocket. Residues 38–42 (NATRK) form a G2 region. The G3 stretch occupies residues 64–67 (DTPG). GTP is bound by residues 64-68 (DTPGL) and 122-125 (SKID). The tract at residues 122–125 (SKID) is G4. The G5 stretch occupies residues 152–154 (LSA). The KH type-2 domain occupies 204-280 (LSDEIPYESD…FLNLQVIAQK (77 aa)).

This sequence belongs to the TRAFAC class TrmE-Era-EngA-EngB-Septin-like GTPase superfamily. Era GTPase family. Monomer.

The protein resides in the cytoplasm. Its subcellular location is the cell inner membrane. In terms of biological role, an essential GTPase that binds both GDP and GTP, with rapid nucleotide exchange. Plays a role in 16S rRNA processing and 30S ribosomal subunit biogenesis and possibly also in cell cycle regulation and energy metabolism. The polypeptide is GTPase Era (Helicobacter pylori (strain HPAG1)).